The primary structure comprises 397 residues: Enoyl-[acyl-carrier-protein] reductase [NADH] (397 aa).

NAD(+) is bound by residues 48–53 (GASTGY), 74–75 (FE), 111–112 (DA), and 139–140 (VA). Tyr225 lines the substrate pocket. Tyr235 serves as the catalytic Proton donor. Residues Lys244 and 273 to 275 (VVT) each bind NAD(+).

The protein belongs to the TER reductase family. In terms of assembly, monomer.

The catalysed reaction is a 2,3-saturated acyl-[ACP] + NAD(+) = a (2E)-enoyl-[ACP] + NADH + H(+). It functions in the pathway lipid metabolism; fatty acid biosynthesis. Functionally, involved in the final reduction of the elongation cycle of fatty acid synthesis (FAS II). Catalyzes the reduction of a carbon-carbon double bond in an enoyl moiety that is covalently linked to an acyl carrier protein (ACP). This Burkholderia pseudomallei (strain 668) protein is Enoyl-[acyl-carrier-protein] reductase [NADH].